Reading from the N-terminus, the 502-residue chain is Arginine decarboxylase (502 aa).

At Lys-42 the chain carries N6-(pyridoxal phosphate)lysine. 226–236 contacts substrate; it reads IDIGGGLGIDY.

Belongs to the Orn/Lys/Arg decarboxylase class-II family. SpeA subfamily. It depends on pyridoxal 5'-phosphate as a cofactor. The cofactor is Mg(2+).

The enzyme catalyses L-arginine + H(+) = agmatine + CO2. Its pathway is amine and polyamine biosynthesis; agmatine biosynthesis; agmatine from L-arginine: step 1/1. The sequence is that of Arginine decarboxylase from Solanum lycopersicum (Tomato).